A 113-amino-acid chain; its full sequence is Nitrogenase vanadium-iron protein delta chain (113 aa).

As to quaternary structure, hexamer of two alpha, two beta, and two delta chains. It depends on iron-sulfur cluster as a cofactor. Requires vanadium cation as cofactor.

It catalyses the reaction N2 + 8 reduced [2Fe-2S]-[ferredoxin] + 16 ATP + 16 H2O = H2 + 8 oxidized [2Fe-2S]-[ferredoxin] + 2 NH4(+) + 16 ADP + 16 phosphate + 6 H(+). Functionally, the key enzymatic reactions in nitrogen fixation are catalyzed by the nitrogenase complex, which has 2 components: the iron protein (component 2) and a component 1 which is either a molybdenum-iron protein, a vanadium-iron, or an iron-iron protein. In Azotobacter salinestris, this protein is Nitrogenase vanadium-iron protein delta chain (vnfG).